A 270-amino-acid chain; its full sequence is 3-methyl-2-oxobutanoate hydroxymethyltransferase (270 aa).

The Mg(2+) site is built by D43 and D82. 3-methyl-2-oxobutanoate is bound by residues 43-44 (DS), D82, and K112. E114 serves as a coordination point for Mg(2+). Residue E179 is the Proton acceptor of the active site.

It belongs to the PanB family. As to quaternary structure, homodecamer; pentamer of dimers. Mg(2+) is required as a cofactor.

It is found in the cytoplasm. It carries out the reaction 3-methyl-2-oxobutanoate + (6R)-5,10-methylene-5,6,7,8-tetrahydrofolate + H2O = 2-dehydropantoate + (6S)-5,6,7,8-tetrahydrofolate. The protein operates within cofactor biosynthesis; (R)-pantothenate biosynthesis; (R)-pantoate from 3-methyl-2-oxobutanoate: step 1/2. Its function is as follows. Catalyzes the reversible reaction in which hydroxymethyl group from 5,10-methylenetetrahydrofolate is transferred onto alpha-ketoisovalerate to form ketopantoate. The protein is 3-methyl-2-oxobutanoate hydroxymethyltransferase of Staphylococcus carnosus (strain TM300).